Here is a 283-residue protein sequence, read N- to C-terminus: ATP synthase gamma chain (283 aa).

It belongs to the ATPase gamma chain family. As to quaternary structure, F-type ATPases have 2 components, CF(1) - the catalytic core - and CF(0) - the membrane proton channel. CF(1) has five subunits: alpha(3), beta(3), gamma(1), delta(1), epsilon(1). CF(0) has three main subunits: a, b and c.

The protein localises to the cell membrane. Functionally, produces ATP from ADP in the presence of a proton gradient across the membrane. The gamma chain is believed to be important in regulating ATPase activity and the flow of protons through the CF(0) complex. The polypeptide is ATP synthase gamma chain (Clostridium beijerinckii (strain ATCC 51743 / NCIMB 8052) (Clostridium acetobutylicum)).